The following is a 139-amino-acid chain: GSK3B-interacting protein (139 aa).

A required for PRKAR2A interaction; contributes to a protective effect against H(2)O(2)-induced apoptosis region spans residues 41 to 45 (VNDVL). Residues 115–139 (SPAYREAFGNALLQRLEALKRDGQS) are interaction with GSK3B and acts as a GSK3B inhibitor.

This sequence belongs to the GSKIP family. Forms a complex composed of PRKAR2A or PRKAR2B, GSK3B and GSKIP through GSKIP interaction; facilitates PKA-induced phosphorylation of GSK3B leading to GSK3B inactivation; recruits DNM1L through GSK3B for PKA-mediated phosphorylation of DNM1L; promotes beta-catenin degradation through GSK3B-induced phosphorylation of beta-catenin; stabilizes beta-catenin and enhances Wnt-induced signaling through PKA-induced phosphorylation of beta-catenin. Interacts with GSK3B; induces GSK3B-mediated phosphorylation of GSKIP and inhibits GSK3B kinase activity. Post-translationally, phosphorylated by GSK3B.

It localises to the cytoplasm. The protein resides in the nucleus. Functionally, A-kinase anchoring protein for GSK3B and PKA that regulates or facilitates their kinase activity towards their targets. The ternary complex enhances Wnt-induced signaling by facilitating the GSK3B- and PKA-induced phosphorylation of beta-catenin leading to beta-catenin degradation and stabilization respectively. Upon cAMP activation, the ternary complex contributes to neuroprotection against oxidative stress-induced apoptosis by facilitating the PKA-induced phosphorylation of DML1 and PKA-induced inactivation of GSK3B. During neurite outgrowth promotes neuron proliferation; while increases beta-catenin-induced transcriptional activity through GSK3B kinase activity inhibition, reduces N-cadherin level to promote cell cycle progression. May play a role in cleft palate formation and is required for postnatal life through modulation of the activity of GSK3B during development. The chain is GSK3B-interacting protein from Mus musculus (Mouse).